Reading from the N-terminus, the 93-residue chain is Small ribosomal subunit protein bS20c (93 aa).

It belongs to the bacterial ribosomal protein bS20 family.

The protein resides in the plastid. The protein localises to the chloroplast. Binds directly to 16S ribosomal RNA. This Thalassiosira pseudonana (Marine diatom) protein is Small ribosomal subunit protein bS20c.